The chain runs to 433 residues: Adenylosuccinate synthetase (433 aa).

GTP is bound by residues 11 to 17 and 39 to 41; these read GDEGKGK and GHT. The active-site Proton acceptor is the D12. Positions 12 and 39 each coordinate Mg(2+). IMP is bound by residues 12 to 15, 37 to 40, T134, R148, N230, T245, and R309; these read DEGK and NAGH. Catalysis depends on H40, which acts as the Proton donor. 305-311 provides a ligand contact to substrate; the sequence is VTTGRKR. GTP contacts are provided by residues R311, 337-339, and 419-421; these read KLD and GTG.

It belongs to the adenylosuccinate synthetase family. In terms of assembly, homodimer. Requires Mg(2+) as cofactor.

The protein resides in the cytoplasm. It catalyses the reaction IMP + L-aspartate + GTP = N(6)-(1,2-dicarboxyethyl)-AMP + GDP + phosphate + 2 H(+). Its pathway is purine metabolism; AMP biosynthesis via de novo pathway; AMP from IMP: step 1/2. In terms of biological role, plays an important role in the de novo pathway and in the salvage pathway of purine nucleotide biosynthesis. Catalyzes the first committed step in the biosynthesis of AMP from IMP. The chain is Adenylosuccinate synthetase from Saccharomyces cerevisiae (strain YJM789) (Baker's yeast).